We begin with the raw amino-acid sequence, 61 residues long: MAFDKKLLEIVACPVCKGKLEYDKAAEQLICKFDRLAYPITEGIPVLLENRATPWQEQTAE.

The protein belongs to the UPF0434 family.

This chain is UPF0434 protein Sama_1339, found in Shewanella amazonensis (strain ATCC BAA-1098 / SB2B).